Consider the following 87-residue polypeptide: Translation initiation factor IF-1 2 (87 aa).

An S1-like domain is found at 1 to 72; sequence MAKEELLELD…TKGRINFRHK (72 aa).

It belongs to the IF-1 family. Component of the 30S ribosomal translation pre-initiation complex which assembles on the 30S ribosome in the order IF-2 and IF-3, IF-1 and N-formylmethionyl-tRNA(fMet); mRNA recruitment can occur at any time during PIC assembly.

Its subcellular location is the cytoplasm. Functionally, one of the essential components for the initiation of protein synthesis. Stabilizes the binding of IF-2 and IF-3 on the 30S subunit to which N-formylmethionyl-tRNA(fMet) subsequently binds. Helps modulate mRNA selection, yielding the 30S pre-initiation complex (PIC). Upon addition of the 50S ribosomal subunit IF-1, IF-2 and IF-3 are released leaving the mature 70S translation initiation complex. The polypeptide is Translation initiation factor IF-1 2 (Burkholderia vietnamiensis (strain G4 / LMG 22486) (Burkholderia cepacia (strain R1808))).